The following is a 432-amino-acid chain: Adenylosuccinate synthetase (432 aa).

GTP is bound by residues Gly12–Lys18 and Gly40–Thr42. Asp13 (proton acceptor) is an active-site residue. Residues Asp13 and Gly40 each coordinate Mg(2+). IMP is bound by residues Asp13 to Lys16, Asn38 to His41, Thr130, Arg144, Gln225, Thr240, and Arg304. His41 acts as the Proton donor in catalysis. Ala300–Arg306 is a binding site for substrate. GTP is bound by residues Arg306, Lys332–Asp334, and Ser414–Gly416.

Belongs to the adenylosuccinate synthetase family. Homodimer. Mg(2+) is required as a cofactor.

The protein localises to the cytoplasm. It catalyses the reaction IMP + L-aspartate + GTP = N(6)-(1,2-dicarboxyethyl)-AMP + GDP + phosphate + 2 H(+). It functions in the pathway purine metabolism; AMP biosynthesis via de novo pathway; AMP from IMP: step 1/2. In terms of biological role, plays an important role in the de novo pathway of purine nucleotide biosynthesis. Catalyzes the first committed step in the biosynthesis of AMP from IMP. This is Adenylosuccinate synthetase from Anaeromyxobacter dehalogenans (strain 2CP-1 / ATCC BAA-258).